A 979-amino-acid polypeptide reads, in one-letter code: Glucose transport transcription regulator RGT1 (979 aa).

Composition is skewed to basic and acidic residues over residues 1–14, 36–47, and 105–114; these read MSAS…KEAE, DQCREKKTRCDF, and FKGDAGRPRA. Disordered regions lie at residues 1–47, 65–142, 165–219, 249–380, 563–590, and 926–954; these read MSAS…RCDF, TFER…LAPG, IDSL…EDCR, LPQQ…SIES, DTEA…GKSA, and APES…NTSL. The zn(2)-C6 fungal-type DNA-binding region spans 35–64; sequence CDQCREKKTRCDFSDERPICSACQRMGKTC. The segment covering 132–142 has biased composition (low complexity); it reads QPRLQPLLAPG. 2 stretches are compositionally biased toward polar residues: residues 170–179 and 186–207; these read SDVSNRNGSE and SNAS…SQLP. Positions 251-263 are enriched in low complexity; that stretch reads QQQQQQQQQNAQQ. A compositionally biased stretch (basic and acidic residues) spans 280–295; the sequence is EHFKEFDEGFHSRKGS. Residues 296–309 show a composition bias toward low complexity; sequence DVSVAVSPSSPVQV. Residues 310–329 are compositionally biased toward polar residues; sequence TRTQQAGLNSESRDTNTATA. Basic residues predominate over residues 358–368; the sequence is GPRKQKRKNSN. The span at 369-380 shows a compositional bias: low complexity; that stretch reads RNKPGSQSSIES. Over residues 565-574 the composition is skewed to acidic residues; the sequence is EASENEDEAG. Low complexity predominate over residues 942–953; that stretch reads PGPNSDGSNNTS.

It belongs to the EDS1/RGT1 family.

It is found in the nucleus. Its subcellular location is the cytoplasm. Glucose-responsive transcription factor that regulates expression of several glucose transporter (HXT) genes in response to glucose. In the absence of glucose, it functions as a transcriptional repressor, whereas high concentrations of glucose cause it to function as a transcriptional activator. In cells growing on low levels of glucose, has a neutral role, neither repressing nor activating transcription. The sequence is that of Glucose transport transcription regulator RGT1 (RGT1) from Lachancea thermotolerans (strain ATCC 56472 / CBS 6340 / NRRL Y-8284) (Yeast).